The following is a 441-amino-acid chain: Platelet-activating factor acetylhydrolase (441 aa).

The signal sequence occupies residues 1–21 (MVPPKLHVLFCLCGCLAVVYP). The Nucleophile role is filled by Ser-273. Catalysis depends on charge relay system residues Asp-296 and His-351. N-linked (GlcNAc...) asparagine glycans are attached at residues Asn-423 and Asn-433.

It belongs to the AB hydrolase superfamily. Lipase family. Post-translationally, N-glycosylated. Macrophage-derived PLA2G7 carries sialylated complex-type N-glycans that hinder its binding to HDL particles. As to expression, plasma. Secreted by macrophages (at protein level).

It is found in the secreted. The protein localises to the extracellular space. The enzyme catalyses a 1-O-alkyl-2-acetyl-sn-glycero-3-phosphocholine + H2O = a 1-O-alkyl-sn-glycero-3-phosphocholine + acetate + H(+). The catalysed reaction is 1-O-decyl-2-acetyl-sn-glycero-3-phosphocholine + H2O = 1-O-decyl-sn-glycero-3-phosphocholine + acetate + H(+). It carries out the reaction 1-O-dodecyl-2-acetyl-sn-glycero-3-phosphocholine + H2O = 1-O-dodecyl-sn-glycero-3-phosphocholine + acetate + H(+). It catalyses the reaction 1-O-tetradecyl-2-acetyl-sn-glycero-3-phosphocholine + H2O = 1-O-tetradecyl-sn-glycero-3-phosphocholine + acetate + H(+). The enzyme catalyses 1-O-hexadecyl-2-acetyl-sn-glycero-3-phosphocholine + H2O = 1-O-hexadecyl-sn-glycero-3-phosphocholine + acetate + H(+). The catalysed reaction is 1-O-octadecyl-2-acetyl-sn-glycero-3-phosphocholine + H2O = 1-O-octadecyl-sn-glycero-3-phosphocholine + acetate + H(+). It carries out the reaction 1-hexadecanoyl-2-acetyl-sn-glycero-3-phosphocholine + H2O = 1-hexadecanoyl-sn-glycero-3-phosphocholine + acetate + H(+). It catalyses the reaction 1-hexadecanoyl-2-propionyl-sn-glycero-3-phosphocholine + H2O = propanoate + 1-hexadecanoyl-sn-glycero-3-phosphocholine + H(+). The enzyme catalyses 1-hexadecanoyl-2-butanoyl-sn-glycero-3-phosphocholine + H2O = butanoate + 1-hexadecanoyl-sn-glycero-3-phosphocholine + H(+). The catalysed reaction is 1-hexadecanoyl-2-pentanoyl-sn-glycero-3-phosphocholine + H2O = pentanoate + 1-hexadecanoyl-sn-glycero-3-phosphocholine + H(+). It carries out the reaction 1-hexadecanoyl-2-glutaroyl-sn-glycero-3-phosphocholine + H2O = glutarate + 1-hexadecanoyl-sn-glycero-3-phosphocholine + H(+). It catalyses the reaction 1-hexadecanoyl-2-(5-oxopentanoyl)-sn-glycero-3-phosphocholine + H2O = 5-oxopentanoate + 1-hexadecanoyl-sn-glycero-3-phosphocholine + H(+). The enzyme catalyses 1-hexadecanoyl-2-(9-oxononanoyl)-sn-glycero-3-phosphocholine + H2O = 9-oxononanoate + 1-hexadecanoyl-sn-glycero-3-phosphocholine + H(+). The catalysed reaction is 1-hexadecanoyl-2-[9-hydroperoxy-(10E-octadecenoyl)]-sn-glycero-3-phosphocholine + H2O = 9-hydroperoxy-10E-octadecenoate + 1-hexadecanoyl-sn-glycero-3-phosphocholine + H(+). It carries out the reaction 1-hexadecanoyl-2-(10-hydroperoxy-8E-octadecenoyl)-sn-glycero-3-phosphocholine + H2O = 10-hydroperoxy-(8E)-octadecenoate + 1-hexadecanoyl-sn-glycero-3-phosphocholine + H(+). Its function is as follows. Lipoprotein-associated calcium-independent phospholipase A2 involved in phospholipid catabolism during inflammatory and oxidative stress response. At the lipid-aqueous interface, hydrolyzes the ester bond of fatty acyl group attached at sn-2 position of phospholipids (phospholipase A2 activity). Specifically targets phospholipids with a short-chain fatty acyl group at sn-2 position. Can hydrolyze phospholipids with long fatty acyl chains, only if they carry oxidized functional groups. Hydrolyzes and inactivates platelet-activating factor (PAF, 1-O-alkyl-2-acetyl-sn-glycero-3-phosphocholine), a potent pro-inflammatory signaling lipid that acts through PTAFR on various innate immune cells. Hydrolyzes oxidatively truncated phospholipids carrying an aldehyde group at omega position, preventing their accumulation in low-density lipoprotein (LDL) particles and uncontrolled pro-inflammatory effects. As part of high-density lipoprotein (HDL) particles, can hydrolyze phospholipids having long-chain fatty acyl hydroperoxides at sn-2 position and protect against potential accumulation of these oxylipins in the vascular wall. Catalyzes the release from membrane phospholipids of F2-isoprostanes, lipid biomarkers of cellular oxidative damage. In Homo sapiens (Human), this protein is Platelet-activating factor acetylhydrolase (PLA2G7).